Here is a 444-residue protein sequence, read N- to C-terminus: Protein Z-dependent protease inhibitor (444 aa).

Positions 1–21 are cleaved as a signal peptide; that stretch reads MKVVPSLLLSVLLAQVWLVPG. A disordered region spans residues 24-65; that stretch reads PSPQSPETPAPQNQTSRVVQAPKEEEEDEQEASEEKASEEEK. A glycan (N-linked (GlcNAc...) asparagine) is linked at Asn-36. The residue at position 56 (Ser-56) is a Phosphoserine; by FAM20C. Positions 56 to 65 are enriched in basic and acidic residues; sequence SEEKASEEEK. The segment at 136-153 is heparin-binding; sequence TKPGLLPSLFKGLRETLS. N-linked (GlcNAc...) asparagine glycans are attached at residues Asn-180, Asn-197, and Asn-295.

It belongs to the serpin family. As to quaternary structure, interacts with PROZ. Phosphorylated by FAM20C in the extracellular medium. Expressed by the liver and secreted in plasma.

It localises to the secreted. Its function is as follows. Inhibits activity of the coagulation protease factor Xa in the presence of PROZ, calcium and phospholipids. Also inhibits factor XIa in the absence of cofactors. The chain is Protein Z-dependent protease inhibitor (SERPINA10) from Homo sapiens (Human).